The primary structure comprises 142 residues: Large ribosomal subunit protein uL11 (142 aa).

This sequence belongs to the universal ribosomal protein uL11 family. In terms of assembly, part of the ribosomal stalk of the 50S ribosomal subunit. Interacts with L10 and the large rRNA to form the base of the stalk. L10 forms an elongated spine to which L12 dimers bind in a sequential fashion forming a multimeric L10(L12)X complex. In terms of processing, one or more lysine residues are methylated.

In terms of biological role, forms part of the ribosomal stalk which helps the ribosome interact with GTP-bound translation factors. This chain is Large ribosomal subunit protein uL11, found in Shewanella sediminis (strain HAW-EB3).